A 1484-amino-acid chain; its full sequence is Ral GTPase-activating protein subunit beta (1484 aa).

Disordered regions lie at residues 355–437 (PRSD…APRR) and 697–728 (GGENNLKSHSRTNSGISSASGGSTEPTTPDSE). Ser359 carries the post-translational modification Phosphoserine. Phosphothreonine occurs at positions 363 and 379. Polar residues-rich tracts occupy residues 369-381 (SMPQSAAVNTTPP), 392-428 (NKATMKTSTVTTAHTSKVQHQASSTSPLSSPNQTSSE), and 701-725 (NLKSHSRTNSGISSASGGSTEPTTP). Phosphoserine is present on residues Ser421 and Ser710. Thr724 bears the Phosphothreonine mark. Positions 1138-1382 (IGYLDLLPCR…TTLEKEVPVI (245 aa)) constitute a Rap-GAP domain. Position 1275 is a phosphoserine (Ser1275). Positions 1301–1325 (DSLNSSQRLSPSSRMKKLPQGRPVP) are disordered. Positions 1302–1313 (SLNSSQRLSPSS) are enriched in low complexity.

As to quaternary structure, component of the heterodimeric RalGAP1 complex with RALGAPA1 and of the heterodimeric RalGAP2 complex with RALGAPA2. Heterodimerization is required for activity. As to expression, detected in brain, thymus, lung, heart, spleen, liver and testis (at protein level).

In terms of biological role, non-catalytic subunit of the heterodimeric RalGAP1 and RalGAP2 complexes which act as GTPase activators for the Ras-like small GTPases RALA and RALB. The polypeptide is Ral GTPase-activating protein subunit beta (Rattus norvegicus (Rat)).